We begin with the raw amino-acid sequence, 492 residues long: Bifunctional purine biosynthesis protein PurH (492 aa).

The 144-residue stretch at 1 to 144 (MKKAILSVSN…KNYKHVTTIV (144 aa)) folds into the MGS-like domain.

It belongs to the PurH family.

It catalyses the reaction (6R)-10-formyltetrahydrofolate + 5-amino-1-(5-phospho-beta-D-ribosyl)imidazole-4-carboxamide = 5-formamido-1-(5-phospho-D-ribosyl)imidazole-4-carboxamide + (6S)-5,6,7,8-tetrahydrofolate. The catalysed reaction is IMP + H2O = 5-formamido-1-(5-phospho-D-ribosyl)imidazole-4-carboxamide. The protein operates within purine metabolism; IMP biosynthesis via de novo pathway; 5-formamido-1-(5-phospho-D-ribosyl)imidazole-4-carboxamide from 5-amino-1-(5-phospho-D-ribosyl)imidazole-4-carboxamide (10-formyl THF route): step 1/1. Its pathway is purine metabolism; IMP biosynthesis via de novo pathway; IMP from 5-formamido-1-(5-phospho-D-ribosyl)imidazole-4-carboxamide: step 1/1. The polypeptide is Bifunctional purine biosynthesis protein PurH (Staphylococcus aureus (strain MRSA252)).